A 177-amino-acid polypeptide reads, in one-letter code: Large ribosomal subunit protein uL6 (177 aa).

Belongs to the universal ribosomal protein uL6 family. In terms of assembly, part of the 50S ribosomal subunit.

Its function is as follows. This protein binds to the 23S rRNA, and is important in its secondary structure. It is located near the subunit interface in the base of the L7/L12 stalk, and near the tRNA binding site of the peptidyltransferase center. The chain is Large ribosomal subunit protein uL6 from Paracoccus denitrificans (strain Pd 1222).